Consider the following 674-residue polypeptide: Inorganic pyrophosphatase TTM2 (674 aa).

A CYTH domain is found at 248-410 (SPTYILKSRK…PRTYIEQIQL (163 aa)). Disordered stretches follow at residues 457 to 498 (KNLK…SPAN) and 619 to 640 (RSRL…SKSS). The span at 484–496 (SDRRYEERNHDSP) shows a compositional bias: basic and acidic residues. Residues 623-640 (ARTGSSNSGNRGRSSKSS) are compositionally biased toward low complexity. A helical membrane pass occupies residues 650–670 (LPLVLTVAICSIGIIVIKSYI).

The cofactor is Mg(2+). In terms of tissue distribution, predominantly expressed in the shoot apices of inflorescences.

The protein resides in the mitochondrion outer membrane. It carries out the reaction diphosphate + H2O = 2 phosphate + H(+). Its function is as follows. Exhibits pyrophosphatase activity with stronger affinity for pyrophosphate (PPi), moderate affinity for ATP and ADP, and weak affinity for tripolyphosphate (PPPi). No activity observed toward uridine substrate. Negative regulator of the salicylic acid (SA)-mediated amplification of defense responses against both virulent and avirulent pathogens, including oomycetes (e.g. H.arabidopsidis) and bacteria (e.g. P.syringae). Represses systemic acquired resistance (SAR). This Arabidopsis thaliana (Mouse-ear cress) protein is Inorganic pyrophosphatase TTM2.